The sequence spans 83 residues: Hainantoxin-III 2 (83 aa).

The signal sequence occupies residues 1–21 (MKASMYLALAGLVLLFVVGYA). A propeptide spanning residues 22–48 (SESEEKEFPRELLSKIFAVDDFKGEER) is cleaved from the precursor. Intrachain disulfides connect Cys50–Cys65, Cys57–Cys70, and Cys64–Cys77. Leu81 bears the Leucine amide mark.

It belongs to the neurotoxin 10 (Hwtx-1) family. 15 (Hntx-3) subfamily. In terms of assembly, monomer. In terms of tissue distribution, expressed by the venom gland.

It localises to the secreted. Selective antagonist of neuronal tetrodotoxin (TTX)-sensitive voltage-gated sodium channels (IC(50)=1270 nM on Nav1.1/SCN1A, 270 nM on Nav1.2/SCN2A, 491 nM on Nav1.3/SCN3A and 232 nM on Nav1.7/SCN9A). This toxin suppress Nav1.7 current amplitude without significantly altering the activation, inactivation, and repriming kinetics. Short extreme depolarizations partially activate the toxin-bound channel, indicating voltage-dependent inhibition of this toxin. This toxin increases the deactivation of the Nav1.7 current after extreme depolarizations. The toxin-Nav1.7 complex is gradually dissociated upon prolonged strong depolarizations in a voltage-dependent manner, and the unbound toxin rebinds to Nav1.7 after a long repolarization. Moreover, analysis of chimeric channels showed that the DIIS3-S4 linker is critical for toxin binding to Nav1.7. These data are consistent with this toxin interacting with Nav1.7 site 4 and trapping the domain II voltage sensor in the closed state. This Cyriopagopus hainanus (Chinese bird spider) protein is Hainantoxin-III 2.